Consider the following 160-residue polypeptide: Eosinophil cationic protein (160 aa).

Positions M1–A27 are cleaved as a signal peptide. The tract at residues R28–R72 is required for nearly all of the bactericidal activity; partially involved in LPS-binding and bacterial membrane depolarization. The active-site Proton acceptor is the H42. 4 disulfide bridges follow: C50–C110, C64–C123, C82–C138, and C89–C98. Y60 carries the post-translational modification 3'-nitrotyrosine. K65–T69 lines the substrate pocket. N-linked (GlcNAc...) asparagine glycans are attached at residues N84, N92, and N119. H155 acts as the Proton donor in catalysis.

The protein belongs to the pancreatic ribonuclease family. Interacts with bacterial lipopolysaccharide (LPS) and lipoteichoic acid (LTA). In vitro interacts with and insert into lipid bilayers composed of dioleoyl phosphatidylcholine and dioleoyl phosphatidylglycerol. In vitro, tends to form amyloid-like aggregates at pH 3, but not at pH 5, nor 7.

The protein resides in the secreted. In terms of biological role, cytotoxin and helminthotoxin with low-efficiency ribonuclease activity. Possesses a wide variety of biological activities. Exhibits antibacterial activity, including cytoplasmic membrane depolarization of preferentially Gram-negative, but also Gram-positive strains. Promotes E.coli outer membrane detachment, alteration of the overall cell shape and partial loss of cell content. The polypeptide is Eosinophil cationic protein (RNASE3) (Homo sapiens (Human)).